The chain runs to 558 residues: MAKSRRDRNSWGGFSEKSSDWSSEEEEPVRKAGPVQVLIVKDDHSFELDEAALNRILLSQAVRDKEVVAVSVAGAFRKGKSFLMDFMLRYMYNQESVDWVGDYNEPLTGFSWRGGSERETTGIQIWSEVFLINKLDGKKVAVLLMDTQGTFDSQSTLRDSATVFALSTMISSIQVYNLSQNVQEDDLQHLQLFTEYGRLAMEETFLKPFQSLIFLVRDWSFPYEFSYGADGGAKFLEKRLKVSGNQHEELQNVRKHIHSCFTNISCFLLPHPGLKVATNPNFDGKLKEIDDEFIKNLKILIPWLLSPERLDIKEINGNKITCRGLLEYFKAYIKIYQGEELPHPKSMLQATAEANNLAAVATAKDTYNKKMEEVCGGDKPFLAPNDLQSKHLQLKEESVKLFRGVKKMGGEEFSRRYLQQLESEIDELYIQYIKHNDSKNIFHAARTPATLFVVIFITYVIAGVTGFIGLDIIASLCNMIMGLTLITLCTWAYIRYSGEYRELGAVIDQVAAALWDQGSTNEALYKLYSAAATHRHLCHQAFPAPKSEPTQQPEKKKI.

Residues 1 to 28 (MAKSRRDRNSWGGFSEKSSDWSSEEEEP) form a disordered region. The interval 1-34 (MAKSRRDRNSWGGFSEKSSDWSSEEEEPVRKAGP) is N-terminal hypervariable region (HVR). At 1-449 (MAKSRRDRNS…NIFHAARTPA (449 aa)) the chain is on the cytoplasmic side. A phosphoserine mark is found at serine 10, serine 22, and serine 23. The GB1/RHD3-type G domain occupies 64–309 (DKEVVAVSVA…LIPWLLSPER (246 aa)). GDP contacts are provided by arginine 77, lysine 78, glycine 79, lysine 80, serine 81, phenylalanine 82, glutamine 148, arginine 217, aspartate 218, valine 276, and asparagine 279. GTP-binding residues include arginine 77, lysine 78, glycine 79, lysine 80, serine 81, and phenylalanine 82. Serine 81 is a Mg(2+) binding site. GTP-binding residues include arginine 217, aspartate 218, and valine 276. Positions 347-438 (MLQATAEANN…YIQYIKHNDS (92 aa)) are 3HB (three-helix bundle) domain. The residue at position 395 (lysine 395) is an N6-acetyllysine. Residues 412–439 (EFSRRYLQQLESEIDELYIQYIKHNDSK) adopt a coiled-coil conformation. A linker region spans residues 439–447 (KNIFHAART). The helical transmembrane segment at 450 to 470 (TLFVVIFITYVIAGVTGFIGL) threads the bilayer. A topological domain (lumenal) is located at residue aspartate 471. The helical transmembrane segment at 472-492 (IIASLCNMIMGLTLITLCTWA) threads the bilayer. Over 493 to 558 (YIRYSGEYRE…PTQQPEKKKI (66 aa)) the chain is Cytoplasmic. Residues 521–558 (NEALYKLYSAAATHRHLCHQAFPAPKSEPTQQPEKKKI) form an autoinhibitory domain region.

Belongs to the TRAFAC class dynamin-like GTPase superfamily. GB1/RHD3 GTPase family. GB1 subfamily. Monomeric and homodimeric. The homodimer, transiently formed by two molecules on opposing membranes, is the active form mediating ER membrane fusion. Interacts with REEP1, REEP5, RTN3 and RTN4 (via the transmembrane region); these proteins are involved in endoplasmic reticulum tubular network organization. Interacts with ZFYVE27; both proteins are involved in endoplasmic reticulum tubular network organization. Interacts with ARL6IP1; both proteins are involved in endoplasmic reticulum tubular network organization. Interacts with SPAST; the interaction is direct, could recruit SPAST to Golgi membranes. Interacts (via N-terminal region) with MAP4K4 (via CNH regulatory domain). May interact with TMED2. Interacts with CPT1C. Post-translationally, phosphorylated. Phosphorylation, by different kinases, of the N-terminal hypervariable region (HVR) regulates the ATL1-mediated membrane tethering step.

Its subcellular location is the endoplasmic reticulum membrane. The protein resides in the golgi apparatus membrane. It is found in the cell projection. It localises to the axon. It carries out the reaction GTP + H2O = GDP + phosphate + H(+). Functionally, atlastin-1 (ATL1) is a membrane-anchored GTPase that mediates the GTP-dependent fusion of endoplasmic reticulum (ER) membranes, maintaining the continuous ER network. It facilitates the formation of three-way junctions where ER tubules intersect. Two atlastin-1 on neighboring ER tubules bind GTP and form loose homodimers through the GB1/RHD3-type G domains and 3HB regions. Upon GTP hydrolysis, the 3HB regions tighten, pulling the membranes together to drive their fusion. After fusion, the homodimer disassembles upon release of inorganic phosphate (Pi). Subsequently, GDP dissociates, resetting the monomers to a conformation ready for a new fusion cycle. May also regulate more or less directly Golgi biogenesis. Indirectly regulates axonal development. The polypeptide is Atlastin-1 (Mus musculus (Mouse)).